We begin with the raw amino-acid sequence, 85 residues long: Large ribosomal subunit protein uL29 (85 aa).

It belongs to the universal ribosomal protein uL29 family.

In Thermobifida fusca (strain YX), this protein is Large ribosomal subunit protein uL29.